We begin with the raw amino-acid sequence, 806 residues long: MKQDVTVELTGGKKLHFETGRMAKQASGAALVTQGESVVLATAVAAPDPKEGIDFFPLTVDYREYAYAGGRIPGGFIKREGRPSEREILTSRQIDRPIRPLFPEGFRNETQVIALVFSADKENDPDIVGINAASAALALSDIPFAGPVGAVRVGYVNGEYVINPSYAERRDSSINITVVGTMDGIVMIESGSAEVPEEVVLGAIDFGHTEIKKIVAAINELAAKAGKTKRAVTAPEFDEAYFETLKNKIGARLADALDTKAHPKTESYALVKQIKDELAAEIPADENAGAAKKKLAHYYELLREKIFREQVTKDRVRPDRRGFDEIRQITIEVGVLPRTHGSALFTRGETQALVTATLGTNDDSQRLETFEGEQKKRFMLHYNFPPFSVGEVGRMTGVGRREVGHGALAERAISAVLPGEDESPYALRVVSDILESNGSSSMASVCGASLALMDAGIPLKGAVAGVAMGLVKEGDEYAILTDIAGAEDHYGDMDFKVAGTRKGITALQMDIKISGITGQIMREAMEQARRGRMFLLDKMDEILAAPREEKSKHAPQIRTVQIPTDKIRDLIGPGGKTIRGIIEATQVKIDVDDTGRVNIASSDEEGLKKALAMINDLTAVPEVGKTYLGKVVRLAEFGAFVEIFPGTDGLLHISEIAEHRVKEVKDELHEGDQVMVKVLGVEGNRIKLSRKAVIREQRQKLGLPEPGAEAPAAAEGQPRAERAERQPSSNASTITIEGGEDFDDFDEEGGEGEGEDENFNREDTPNSAPGERRPGGAGAAGNRGRRRRRGRGRGPGQGGGGNRGPQ.

Mg(2+) is bound by residues Asp-488 and Asp-494. The region spanning 555-614 is the KH domain; it reads PQIRTVQIPTDKIRDLIGPGGKTIRGIIEATQVKIDVDDTGRVNIASSDEEGLKKALAMI. The S1 motif domain occupies 624–691; sequence GKTYLGKVVR…EGNRIKLSRK (68 aa). The interval 698 to 806 is disordered; it reads RQKLGLPEPG…QGGGGNRGPQ (109 aa). Residues 704–717 show a composition bias toward low complexity; it reads PEPGAEAPAAAEGQ. The segment covering 738 to 757 has biased composition (acidic residues); the sequence is GGEDFDDFDEEGGEGEGEDE. Positions 758-774 are enriched in basic and acidic residues; sequence NFNREDTPNSAPGERRP. The span at 783-792 shows a compositional bias: basic residues; the sequence is RGRRRRRGRG. The span at 793 to 806 shows a compositional bias: gly residues; that stretch reads RGPGQGGGGNRGPQ.

It belongs to the polyribonucleotide nucleotidyltransferase family. Mg(2+) serves as cofactor.

Its subcellular location is the cytoplasm. It carries out the reaction RNA(n+1) + phosphate = RNA(n) + a ribonucleoside 5'-diphosphate. Involved in mRNA degradation. Catalyzes the phosphorolysis of single-stranded polyribonucleotides processively in the 3'- to 5'-direction. In Acidobacterium capsulatum (strain ATCC 51196 / DSM 11244 / BCRC 80197 / JCM 7670 / NBRC 15755 / NCIMB 13165 / 161), this protein is Polyribonucleotide nucleotidyltransferase.